The primary structure comprises 462 residues: MAQVSINNDYSEWDLSTDAGERARLLQSPCVDTAPKSEWEASPGGLDRGTTSTLGAIFIVVNACLGAGLLNFPAAFSTAGGVAAGIALQMGMLVFIISGLVILAYCSQASNERTYQEVVWAVCGKLTGVLCEVAIAVYTFGTCIAFLIIIGDQQDKIIAVMAKEPEGASGPWYTDRKFTISLTAFLFILPLSIPREIGFQKYASFLSVVGTWYVTAIVIIKYIWPDKEMTPGNILTRPASWMAVFNAMPTICFGFQCHVSSVPVFNSMQQPEVKTWGGVVTAAMVIALAVYMGTGICGFLTFGAAVDPDVLLSYPSEDMAVAVARAFIILSVLTSYPILHFCGRAVVEGLWLRYQGVPVEEDVGRERRRRVLQTLVWFLLTLLLALFIPDIGKVISVIGGLAACFIFVFPGLCLIQAKLSEMEEVKPASWWVLVSYGVLLVTLGAFIFGQTTANAIFVDLLA.

A Phosphoserine modification is found at S28. Transmembrane regions (helical) follow at residues 56 to 76 (AIFI…PAAF), 82 to 102 (VAAG…GLVI), 130 to 150 (LCEV…LIII), 178 to 198 (FTIS…REIG), 205 to 225 (FLSV…YIWP), 239 to 259 (ASWM…QCHV), 282 to 302 (AAMV…FLTF), 319 to 339 (MAVA…YPIL), 371 to 391 (VLQT…IPDI), 395 to 415 (ISVI…LCLI), and 428 to 448 (ASWW…AFIF).

Belongs to the amino acid/polyamine transporter 2 family. Interacts with the mTORC1 complex; this interaction mediates the recruitment of mTORC1 to the lysosome and its subsequent activation.

The protein resides in the lysosome membrane. The protein localises to the cell projection. Its subcellular location is the axon. It carries out the reaction L-asparagine(in) + Na(+)(in) = L-asparagine(out) + Na(+)(out). The catalysed reaction is L-glutamine(in) + Na(+)(in) = L-glutamine(out) + Na(+)(out). In terms of biological role, symporter that selectively cotransports sodium ions and amino acids, such as L-glutamine and L-asparagine from the lysosome into the cytoplasm and may participates in mTORC1 activation. The transport activity requires an acidic lysosomal lumen. This is Sodium-coupled neutral amino acid transporter 7 from Homo sapiens (Human).